Here is a 137-residue protein sequence, read N- to C-terminus: Universal stress protein in QAH/OAS sulfhydrylase 3'region (137 aa).

Belongs to the universal stress protein A family.

This chain is Universal stress protein in QAH/OAS sulfhydrylase 3'region, found in Thermus aquaticus.